A 139-amino-acid polypeptide reads, in one-letter code: Putative esterase PM0788 (139 aa).

It belongs to the thioesterase PaaI family.

The chain is Putative esterase PM0788 from Pasteurella multocida (strain Pm70).